The primary structure comprises 428 residues: Serine--tRNA ligase (428 aa).

An L-serine-binding site is contributed by 235–237 (TAE). 266–268 (RSE) serves as a coordination point for ATP. E289 contributes to the L-serine binding site. 353–356 (EISS) contributes to the ATP binding site. An L-serine-binding site is contributed by S389.

Belongs to the class-II aminoacyl-tRNA synthetase family. Type-1 seryl-tRNA synthetase subfamily. In terms of assembly, homodimer. The tRNA molecule binds across the dimer.

The protein resides in the cytoplasm. The catalysed reaction is tRNA(Ser) + L-serine + ATP = L-seryl-tRNA(Ser) + AMP + diphosphate + H(+). It carries out the reaction tRNA(Sec) + L-serine + ATP = L-seryl-tRNA(Sec) + AMP + diphosphate + H(+). It functions in the pathway aminoacyl-tRNA biosynthesis; selenocysteinyl-tRNA(Sec) biosynthesis; L-seryl-tRNA(Sec) from L-serine and tRNA(Sec): step 1/1. Functionally, catalyzes the attachment of serine to tRNA(Ser). Is also able to aminoacylate tRNA(Sec) with serine, to form the misacylated tRNA L-seryl-tRNA(Sec), which will be further converted into selenocysteinyl-tRNA(Sec). In Shewanella denitrificans (strain OS217 / ATCC BAA-1090 / DSM 15013), this protein is Serine--tRNA ligase.